We begin with the raw amino-acid sequence, 878 residues long: Multiple RNA-binding domain-containing protein 1 (878 aa).

One can recognise an RRM 1 domain in the interval 2–90 (SRVIVKGLPI…SKIEVSMAKS (89 aa)). Disordered stretches follow at residues 118–143 (LLADKKDSQKKQKSDSNNDGGKKHDI), 159–269 (TMKP…AKDE), and 287–323 (GADTPVSKQQQQPDTEQQQPEETEVETSQESEEEKSL). Residues 159–177 (TMKPSSQVTSWETVQSSKT) show a composition bias toward polar residues. The span at 180–190 (EDEEAADDEVG) shows a compositional bias: acidic residues. The segment covering 295-304 (QQQQPDTEQQ) has biased composition (low complexity). Residues 305–319 (QPEETEVETSQESEE) show a composition bias toward acidic residues. RRM domains lie at 330-408 (GRLF…PADA), 516-588 (RVIL…KGPS), 651-734 (VSIF…LSHR), and 752-829 (GKII…FVEQ). The interval 732 to 751 (SHRQGTSTTNASSKKKKKNQ) is disordered. Positions 852–878 (TKIANMRNSGKRKIDLDEDDENDGLQG) are disordered. Over residues 867-878 (LDEDDENDGLQG) the composition is skewed to acidic residues.

This sequence belongs to the RRM MRD1 family.

It localises to the nucleus. In terms of biological role, involved in pre-rRNA processing. The polypeptide is Multiple RNA-binding domain-containing protein 1 (MRD1) (Kluyveromyces lactis (strain ATCC 8585 / CBS 2359 / DSM 70799 / NBRC 1267 / NRRL Y-1140 / WM37) (Yeast)).